A 462-amino-acid chain; its full sequence is Sensor histidine kinase ZraS (462 aa).

Residues 1-14 lie on the Cytoplasmic side of the membrane; the sequence is MNVMRLSKDSVAVG. The chain crosses the membrane as a helical span at residues 15–35; the sequence is LSWLLTGLILLLVCLFSALIV. Residues 36–197 are Periplasmic-facing; the sequence is RDYGRENEAA…ADHARGLRNM (162 aa). The helical transmembrane segment at 198 to 218 threads the bilayer; the sequence is VIMLCAAGVVMAATVLAQFWF. Over 219–462 the chain is Cytoplasmic; sequence RRYQRSRKQL…VNGQQKDEQG (244 aa). Residues 247–455 form the Histidine kinase domain; sequence GVAHEIRNPL…LFTFYLPVNG (209 aa). The residue at position 250 (H250) is a Phosphohistidine; by autocatalysis.

Autophosphorylated.

Its subcellular location is the cell inner membrane. It catalyses the reaction ATP + protein L-histidine = ADP + protein N-phospho-L-histidine.. Activity of the ZraS/ZraR two-component system is repressed by the zinc-bound form of ZraP, which probably interacts with the periplasmic region of ZraS. Functionally, part of the Zra signaling pathway, an envelope stress response (ESR) system composed of the periplasmic accessory protein ZraP, the histidine kinase ZraS and the transcriptional regulator ZraR. The ZraPSR system contributes to antibiotic resistance and is important for membrane integrity in the presence of membrane-targeting biocides. ZraS is a member of the two-component regulatory system ZraS/ZraR. Functions as a membrane-associated sensor kinase that phosphorylates ZraR in response to high concentrations of Zn(2+) or Pb(2+) in the medium. This Klebsiella oxytoca protein is Sensor histidine kinase ZraS (zraS).